The sequence spans 82 residues: Chlorosome protein E (82 aa).

His-26 serves as a coordination point for a bacteriochlorophyll c. The segment at 55–82 is disordered; the sequence is GSSGLKGSSPKYSGYATPSKEVKSRFEK. Over residues 59–69 the composition is skewed to low complexity; that stretch reads LKGSSPKYSGY.

Belongs to the BChl C/E-binding protein family.

It localises to the chlorosome. The protein resides in the chlorosome envelope. Functionally, component of the photosynthetic apparatus. The light harvesting B740 complex binds bacteriochlorophyll c. The sequence is that of Chlorosome protein E (csmE) from Chlorobaculum tepidum (strain ATCC 49652 / DSM 12025 / NBRC 103806 / TLS) (Chlorobium tepidum).